The sequence spans 125 residues: Small ribosomal subunit protein uS13 (125 aa).

Residues 95–125 are disordered; that stretch reads GLPVNGQRTRTNARTRKGGKKTVANKKKVTK. The span at 105–125 shows a compositional bias: basic residues; it reads TNARTRKGGKKTVANKKKVTK.

This sequence belongs to the universal ribosomal protein uS13 family. Part of the 30S ribosomal subunit. Forms a loose heterodimer with protein S19. Forms two bridges to the 50S subunit in the 70S ribosome.

Located at the top of the head of the 30S subunit, it contacts several helices of the 16S rRNA. In the 70S ribosome it contacts the 23S rRNA (bridge B1a) and protein L5 of the 50S subunit (bridge B1b), connecting the 2 subunits; these bridges are implicated in subunit movement. Contacts the tRNAs in the A and P-sites. The chain is Small ribosomal subunit protein uS13 from Leptospira borgpetersenii serovar Hardjo-bovis (strain L550).